Reading from the N-terminus, the 442-residue chain is Zuotin (442 aa).

Residues Arg49 to Ala84 are disordered. Phosphothreonine is present on Thr55. Over residues Thr55 to Glu71 the composition is skewed to basic and acidic residues. Phosphoserine is present on residues Ser57 and Ser76. Residues Val72 to Pro83 are compositionally biased toward acidic residues. Positions Asp97–Asp167 constitute a J domain. 2 disordered regions span residues Asp242–Arg270 and Gly306–Ala331. Residues Lys316–Ala330 show a composition bias toward basic and acidic residues.

As to quaternary structure, RAC is a heterodimer of the Hsp70/DnaK-type chaperone ssz1 and the Hsp40/DnaJ-type chaperone zuo1. RAC associates with ribosomes via zuo1.

The protein resides in the cytoplasm. Component of the ribosome-associated complex (RAC), a heterodimeric chaperone complex involved in regulation of accurate translation termination and in folding or maintaining nascent polypeptides in a folding-competent state. RAC stimulates the ATPase activity of the ribosome-associated pool of Hsp70-type chaperones SSB1/SSB2 that bind to the nascent polypeptide chain. In Schizosaccharomyces pombe (strain 972 / ATCC 24843) (Fission yeast), this protein is Zuotin (zuo1).